A 343-amino-acid polypeptide reads, in one-letter code: 7-epi-alpha-eudesmol synthase ((2E,6E)-farnesyl diphosphate cyclizing) (343 aa).

Mg(2+) is bound by residues aspartate 80 and aspartate 84. The short motif at 80 to 84 is the DDXXD motif element; sequence DDQFD. Arginine 177 serves as a coordination point for substrate. The Mg(2+) site is built by asparagine 223 and serine 227. Arginine 230 contributes to the substrate binding site. Residue glutamate 231 participates in Mg(2+) binding. 317-318 contacts substrate; that stretch reads RY.

Belongs to the terpene synthase family. Mg(2+) is required as a cofactor.

It catalyses the reaction (2E,6E)-farnesyl diphosphate + H2O = 7-epi-alpha-eudesmol + diphosphate. The protein operates within secondary metabolite biosynthesis; terpenoid biosynthesis. Catalyzes the conversion of (2E,6E)-farnesyl diphosphate (FPP) to yield the bicyclic sesquiterpenol 7-epi-alpha-eudesmol via a 1,10-cyclization, which requires the abstraction of the pyrophosphate from FPP to yield the (E,E)-germacradienyl cation. The only accepted substrate is (2E,6E)-farnesyl diphosphate (FPP). This is 7-epi-alpha-eudesmol synthase ((2E,6E)-farnesyl diphosphate cyclizing) from Streptomyces viridochromogenes (strain DSM 40736 / JCM 4977 / BCRC 1201 / Tue 494).